A 151-amino-acid chain; its full sequence is Lipoprotein signal peptidase (151 aa).

3 helical membrane passes run 33–53 (VIPD…FGLL), 58–78 (WIFI…QFKI), and 87–107 (LTLG…LFIG). Residues Asp111 and Asp126 contribute to the active site. Residues 120 to 140 (FVFNFADSAIVVGVGLLMILM) traverse the membrane as a helical segment.

The protein belongs to the peptidase A8 family.

Its subcellular location is the cell membrane. It carries out the reaction Release of signal peptides from bacterial membrane prolipoproteins. Hydrolyzes -Xaa-Yaa-Zaa-|-(S,diacylglyceryl)Cys-, in which Xaa is hydrophobic (preferably Leu), and Yaa (Ala or Ser) and Zaa (Gly or Ala) have small, neutral side chains.. The protein operates within protein modification; lipoprotein biosynthesis (signal peptide cleavage). In terms of biological role, this protein specifically catalyzes the removal of signal peptides from prolipoproteins. The sequence is that of Lipoprotein signal peptidase from Desulfitobacterium hafniense (strain DSM 10664 / DCB-2).